A 316-amino-acid polypeptide reads, in one-letter code: tRNA-cytidine(32) 2-sulfurtransferase (316 aa).

The PP-loop motif signature appears at 45–50 (SGGKDS). [4Fe-4S] cluster is bound by residues Cys-120, Cys-123, and Cys-211.

This sequence belongs to the TtcA family. In terms of assembly, homodimer. Mg(2+) serves as cofactor. It depends on [4Fe-4S] cluster as a cofactor.

The protein resides in the cytoplasm. It carries out the reaction cytidine(32) in tRNA + S-sulfanyl-L-cysteinyl-[cysteine desulfurase] + AH2 + ATP = 2-thiocytidine(32) in tRNA + L-cysteinyl-[cysteine desulfurase] + A + AMP + diphosphate + H(+). The protein operates within tRNA modification. Catalyzes the ATP-dependent 2-thiolation of cytidine in position 32 of tRNA, to form 2-thiocytidine (s(2)C32). The sulfur atoms are provided by the cysteine/cysteine desulfurase (IscS) system. The chain is tRNA-cytidine(32) 2-sulfurtransferase from Shewanella sediminis (strain HAW-EB3).